A 310-amino-acid chain; its full sequence is p-hydroxybenzoic acid efflux pump subunit AaeA (310 aa).

A helical transmembrane segment spans residues Ala-12 to Tyr-32.

It belongs to the membrane fusion protein (MFP) (TC 8.A.1) family.

The protein resides in the cell inner membrane. Forms an efflux pump with AaeB. The protein is p-hydroxybenzoic acid efflux pump subunit AaeA of Escherichia coli O17:K52:H18 (strain UMN026 / ExPEC).